We begin with the raw amino-acid sequence, 1706 residues long: PR domain zinc finger protein 2 (1706 aa).

Positions 27–140 (EEVRLFPSAV…PGEELLVWYN (114 aa)) constitute an SET domain. The interval 154-342 (ERASARSKRS…TPPPHTPRAR (189 aa)) is disordered. Positions 158–183 (ARSKRSSPKSRRGKKKSHENKNKGIR) are enriched in basic residues. Polar residues predominate over residues 185–199 (HPTQLKASELDSTFA). The segment covering 258 to 294 (TDCEVNDVEEEELEEEEELEEEEEEELGEDGVEEADM) has biased composition (acidic residues). A compositionally biased stretch (basic and acidic residues) spans 299-313 (SAKEPEIRCEEKPED). 2 consecutive C2H2-type zinc fingers follow at residues 355 to 377 (FPCQHCERKFATKQGLERHMHIH) and 385 to 407 (FKCKYCGKRFGTQINRRRHERRH). 3 disordered regions span residues 400 to 446 (RRRH…QLGQ), 492 to 542 (RRHQ…EEEG), and 618 to 655 (LLKDSPSSTNCESKKRRTASPPVLPKIKTETESDSTAP). S416 is modified (phosphoserine). Positions 427-439 (DGKGENVTSKDES) are enriched in basic and acidic residues. The C2H2-type 3 zinc finger occupies 476-499 (HPCKYCKKVFGTHTNMRRHQRRVH). A Phosphoserine modification is found at S637. Residues K645, K684, and K686 each participate in a glycyl lysine isopeptide (Lys-Gly) (interchain with G-Cter in SUMO2) cross-link. 3 disordered regions span residues 724–794 (TSSR…SPPC), 823–1075 (SGVK…SSVV), and 1088–1112 (VTFKQEESESEGLKPKEEAPPAGGQ). Positions 733–743 (SSPPSSPQHSP) are enriched in low complexity. S738 bears the Phosphoserine mark. K769 participates in a covalent cross-link: Glycyl lysine isopeptide (Lys-Gly) (interchain with G-Cter in SUMO2). S776, S780, and S791 each carry phosphoserine. Residues 823–832 (SGVKQKSEGT) show a composition bias toward polar residues. Over residues 846 to 863 (SVHKKPCDSEGKEFKENH) the composition is skewed to basic and acidic residues. Glycyl lysine isopeptide (Lys-Gly) (interchain with G-Cter in SUMO2) cross-links involve residues K860 and K870. Composition is skewed to polar residues over residues 891–912 (SLPTETTPEVTRSPSPCKSPDT) and 943–952 (LQTASLSSGQ). The segment covering 962–983 (PSSPPPCPPVLTVATPPPPLLP) has biased composition (pro residues). Positions 993-1009 (DASPQQCPSPFSNTTAQ) are enriched in polar residues. Over residues 1010–1019 (SPLPILSPTV) the composition is skewed to low complexity. A compositionally biased stretch (pro residues) spans 1020–1030 (SPSPSPIPPVE). Residues 1034-1062 (SAASPGPPTLSSSSSSSSSFPSSSCSSTS) show a composition bias toward low complexity. Over residues 1091 to 1106 (KQEESESEGLKPKEEA) the composition is skewed to basic and acidic residues. 3 consecutive C2H2-type zinc fingers follow at residues 1123-1145 (FICNVCESPFLSIKDLTKHLSVH), 1151-1174 (FKCEFCVQLFKVKTDLSEHRFLLH), and 1180-1203 (FVCSVCKKEFAFLCNLQQHQRDLH). Glycyl lysine isopeptide (Lys-Gly) (interchain with G-Cter in SUMO2) cross-links involve residues K1136 and K1140. Residues 1218-1227 (LRPQNFTDPS) are compositionally biased toward polar residues. The segment at 1218–1251 (LRPQNFTDPSKANVEHMPSLPEEPLETSREEELN) is disordered. A Glycyl lysine isopeptide (Lys-Gly) (interchain with G-Cter in SUMO2) cross-link involves residue K1269. A C2H2-type 7; atypical zinc finger spans residues 1321–1343 (IRCTKCGKGVDNMPELHKHILAC). Residues 1443–1465 (HICPYCDREFTYIGSLNKHAAFS) form a C2H2-type 8; atypical zinc finger. The segment at 1466–1563 (CPKKPLSPSK…KKASSSSLRN (98 aa)) is disordered. Basic residues predominate over residues 1474–1486 (SKRKVSHSSKKGG). Positions 1487–1498 (HASSSSSDRNSS) are enriched in low complexity. A compositionally biased stretch (polar residues) spans 1528-1544 (GPAQASLPSSSFRSRQN). A compositionally biased stretch (low complexity) spans 1548–1563 (AASVKSKKASSSSLRN).

It belongs to the class V-like SAM-binding methyltransferase superfamily. As to quaternary structure, binds to the retinoblastoma protein (RB). Interacts with GATA3.

The protein resides in the nucleus. It catalyses the reaction L-lysyl-[histone] + S-adenosyl-L-methionine = N(6)-methyl-L-lysyl-[histone] + S-adenosyl-L-homocysteine + H(+). The enzyme catalyses L-lysyl(9)-[histone H3] + 3 S-adenosyl-L-methionine = N(6),N(6),N(6)-trimethyl-L-lysyl(9)-[histone H3] + 3 S-adenosyl-L-homocysteine + 3 H(+). Functionally, S-adenosyl-L-methionine-dependent histone methyltransferase that specifically methylates 'Lys-9' of histone H3. May function as a DNA-binding transcription factor. Binds to the macrophage-specific TPA-responsive element (MTE) of the HMOX1 (heme oxygenase 1) gene and may act as a transcriptional activator of this gene. In Rattus norvegicus (Rat), this protein is PR domain zinc finger protein 2 (Prdm2).